The sequence spans 120 residues: Small ribosomal subunit protein eS24 (120 aa).

Residues 101 to 120 (RDAGTKQKKGGSKGGQGAKG) form a disordered region.

The protein belongs to the eukaryotic ribosomal protein eS24 family.

This Saccharolobus islandicus (strain M.16.4 / Kamchatka #3) (Sulfolobus islandicus) protein is Small ribosomal subunit protein eS24.